A 648-amino-acid chain; its full sequence is Beta-glucuronidase (648 aa).

The N-terminal stretch at 1–22 (MSPRRSVCWFVLGQLLCSCAVA) is a signal peptide. 2 N-linked (GlcNAc...) asparagine glycosylation sites follow: N172 and N416. E447 acts as the Proton donor in catalysis. N-linked (GlcNAc...) asparagine glycosylation occurs at N627.

It belongs to the glycosyl hydrolase 2 family. In terms of assembly, homotetramer. Undergoes a post-transcriptional proteolytic cleavage near its C-terminal end, which reduces its size by approximately 3 kDa. The site of this cleavage has as yet not been determined.

The protein localises to the lysosome. It carries out the reaction a beta-D-glucuronoside + H2O = D-glucuronate + an alcohol. With respect to regulation, inhibited by L-aspartic acid. Plays an important role in the degradation of dermatan and keratan sulfates. The sequence is that of Beta-glucuronidase (Gusb) from Rattus norvegicus (Rat).